A 136-amino-acid polypeptide reads, in one-letter code: Protein NrdI (136 aa).

Belongs to the NrdI family.

In terms of biological role, probably involved in ribonucleotide reductase function. This chain is Protein NrdI, found in Salmonella newport (strain SL254).